The sequence spans 70 residues: Brevinin-1PLc (70 aa).

The N-terminal stretch at 1 to 22 is a signal peptide; sequence MFTLKKSMLLLFFLGTINLSLC. The propeptide occupies 23–44; it reads EEERNAEEERRDEPDEMDVEVE. The cysteines at positions 64 and 70 are disulfide-linked.

In terms of tissue distribution, expressed by the skin glands.

Its subcellular location is the secreted. In terms of biological role, antimicrobial activity against the Gram-negative bacterium E.coli, the Gram-positive bacterium S.aureus and the yeast C.albicans. In Lithobates palustris (Pickerel frog), this protein is Brevinin-1PLc.